The chain runs to 133 residues: Male-specific protein scotti (133 aa).

The tract at residues 11-57 is disordered; the sequence is FPSNGLGNNNNDPNQQRGERPRQPHPDLGWILDAPNEPPRNRNPLLY. The span at 14-24 shows a compositional bias: low complexity; it reads NGLGNNNNDPN. Asparagine 83 carries an N-linked (GlcNAc...) asparagine glycan.

The protein belongs to the male-specific scotti family.

Its function is as follows. Post-meiotically transcribed gene that has a role in late spermiogenesis; required for actin cone progression during spermatid individualization. This Drosophila persimilis (Fruit fly) protein is Male-specific protein scotti.